A 156-amino-acid polypeptide reads, in one-letter code: MKLPLSPSTEPVATEPLGMALLSSILAAWSYISENPERAALYFVSGVCIGLFLTLAALVMRISCHTDCRRGPRRRCLQDRECSDSSDSEDGSEDTASDLSVRRHRRFERTLNKNVFTSAEELERAQRLEERERIIREIWMNGQPEVPGTRSLNRYY.

Residues alanine 40–methionine 60 form a helical membrane-spanning segment. Residues aspartate 79–serine 100 are disordered. Over residues aspartate 84–alanine 96 the composition is skewed to acidic residues. Threonine 110 is subject to Phosphothreonine. Serine 118 is subject to Phosphoserine.

The protein belongs to the EVA1 family.

It is found in the endoplasmic reticulum membrane. The protein resides in the lysosome membrane. In terms of biological role, acts as a regulator of programmed cell death, mediating both autophagy and apoptosis. The protein is Protein eva-1 homolog A (Eva1a) of Mus musculus (Mouse).